Consider the following 477-residue polypeptide: Pentatricopeptide repeat-containing protein At1g55630 (477 aa).

9 PPR repeats span residues 151–185 (TANCYHLLMKIFAECGEYKAMCRLIDEMIKDGYPT), 186–220 (TACTFNLLICTCGEAGLARDVVEQFIKSKTFNYRP), 221–255 (YKHSYNAILHSLLGVKQYKLIDWVYEQMLEDGFTP), 256–290 (DVLTYNIVMFANFRLGKTDRLYRLLDEMVKDGFSP), 291–325 (DLYTYNILLHHLATGNKPLAALNLLNHMREVGVEP), 326–360 (GVIHFTTLIDGLSRAGKLEACKYFMDETVKVGCTP), 361–395 (DVVCYTVMITGYISGGELEKAEEMFKEMTEKGQLP), 396–430 (NVFTYNSMIRGFCMAGKFKEACALLKEMESRGCNP), and 431–465 (NFVVYSTLVNNLKNAGKVLEAHEVVKDMVEKGHYV).

The protein belongs to the PPR family. P subfamily.

This Arabidopsis thaliana (Mouse-ear cress) protein is Pentatricopeptide repeat-containing protein At1g55630.